A 231-amino-acid chain; its full sequence is NADH-ubiquinone oxidoreductase chain 4 (231 aa).

6 consecutive transmembrane segments (helical) span residues 1-21 (PIAG…YGMI), 34-54 (MFMP…LTCL), 63-85 (IAYS…TPWG), 89-111 (AMAL…NTTY), 128-148 (ILPM…AIPP), and 156-176 (FLIM…LGLS).

This sequence belongs to the complex I subunit 4 family.

Its subcellular location is the mitochondrion membrane. It carries out the reaction a ubiquinone + NADH + 5 H(+)(in) = a ubiquinol + NAD(+) + 4 H(+)(out). Functionally, core subunit of the mitochondrial membrane respiratory chain NADH dehydrogenase (Complex I) that is believed to belong to the minimal assembly required for catalysis. Complex I functions in the transfer of electrons from NADH to the respiratory chain. The immediate electron acceptor for the enzyme is believed to be ubiquinone. This is NADH-ubiquinone oxidoreductase chain 4 (MT-ND4) from Bothriechis schlegelii (Eyelash palm pitviper).